The following is a 484-amino-acid chain: tRNA sulfurtransferase (484 aa).

The THUMP domain occupies 63-167; that stretch reads QAFGERLACI…GDKLYMVTKR (105 aa). Residues 185 to 186, Lys267, Gly289, and Gln298 each bind ATP; that span reads LI. A disulfide bridge links Cys346 with Cys458. The Rhodanese domain occupies 406 to 484; the sequence is IDTNEVVIDI…GYHNVKVYRP (79 aa). Cys458 (cysteine persulfide intermediate) is an active-site residue.

This sequence belongs to the ThiI family.

It localises to the cytoplasm. The catalysed reaction is [ThiI sulfur-carrier protein]-S-sulfanyl-L-cysteine + a uridine in tRNA + 2 reduced [2Fe-2S]-[ferredoxin] + ATP + H(+) = [ThiI sulfur-carrier protein]-L-cysteine + a 4-thiouridine in tRNA + 2 oxidized [2Fe-2S]-[ferredoxin] + AMP + diphosphate. It carries out the reaction [ThiS sulfur-carrier protein]-C-terminal Gly-Gly-AMP + S-sulfanyl-L-cysteinyl-[cysteine desulfurase] + AH2 = [ThiS sulfur-carrier protein]-C-terminal-Gly-aminoethanethioate + L-cysteinyl-[cysteine desulfurase] + A + AMP + 2 H(+). The protein operates within cofactor biosynthesis; thiamine diphosphate biosynthesis. Its function is as follows. Catalyzes the ATP-dependent transfer of a sulfur to tRNA to produce 4-thiouridine in position 8 of tRNAs, which functions as a near-UV photosensor. Also catalyzes the transfer of sulfur to the sulfur carrier protein ThiS, forming ThiS-thiocarboxylate. This is a step in the synthesis of thiazole, in the thiamine biosynthesis pathway. The sulfur is donated as persulfide by IscS. This chain is tRNA sulfurtransferase, found in Shewanella oneidensis (strain ATCC 700550 / JCM 31522 / CIP 106686 / LMG 19005 / NCIMB 14063 / MR-1).